The chain runs to 522 residues: MAFLDNPTIILAHIRQSHVTSDDTGMCEMVLIDHDVDLEKIHPPSMPGDSGSEIQGSNGETQGYVYAQSVDITSSWDFGIRRRSNTAQRLERLRKERQNQIKCKNIQWKERNSKQSAQELKSLFEKKSLKEKPPISGKQSILSVRLEQCPLQLNNPFNEYSKFDGKGHVGTTATKKIDVYLPLHSSQDRLLPMTVVTMASARVQDLIGLICWQYTSEGREPKLNDNVSAYCLHIAEDDGEVDTDFPPLDSNEPIHKFGFSTLALVEKYSSPGLTSKESLFVRINAAHGFSLIQVDNTKVTMKEILLKAVKRRKGSQKVSGPQYRLEKQSEPNVAVDLDSTLESQSAWEFCLVRENSSRADGVFEEDSQIDIATVQDMLSSHHYKSFKVSMIHRLRFTTDVQLGISGDKVEIDPVTNQKASTKFWIKQKPISIDSDLLCACDLAEEKSPSHAIFKLTYLSNHDYKHLYFESDAATVNEIVLKVNYILESRASTARADYFAQKQRKLNRRTSFSFQKEKKSGQQ.

At Ala-2 the chain carries N-acetylalanine. The segment at 2-184 (AFLDNPTIIL…KKIDVYLPLH (183 aa)) is interaction with MAP3K2. An interaction with NBN region spans residues 2–267 (AFLDNPTIIL…GFSTLALVEK (266 aa)). Thr-86 bears the Phosphothreonine mark. Residues Ser-128, Ser-186, Ser-315, and Ser-356 each carry the phosphoserine modification. One can recognise a CRIM domain in the interval 139 to 267 (QSILSVRLEQ…GFSTLALVEK (129 aa)). Residues 279-353 (LFVRINAAHG…QSAWEFCLVR (75 aa)) form an SIN1-type RBD region. Residues 382-487 (HYKSFKVSMI…IVLKVNYILE (106 aa)) form the SIN1-type PH domain. An a 1,2-diacyl-sn-glycero-3-phospho-(1D-myo-inositol-3,4,5-trisphosphate)-binding site is contributed by Arg-393. Thr-398 carries the phosphothreonine modification. 2 residues coordinate a 1,2-diacyl-sn-glycero-3-phospho-(1D-myo-inositol-3,4,5-trisphosphate): Lys-428 and Lys-464. Residues 468–522 (FESDAATVNEIVLKVNYILESRASTARADYFAQKQRKLNRRTSFSFQKEKKSGQQ) are interaction with ATF2. Ser-510 is modified (phosphoserine).

This sequence belongs to the SIN1 family. Component of the mechanistic target of rapamycin complex 2 (mTORC2), consisting in two heterotretramers composed of MTOR, MLST8, RICTOR and MAPKAP1/SIN1. The mTORC2 core complex associates with PRR5/PROTOR1 and/or PRR5L/PROTOR2. Contrary to mTORC1, mTORC2 does not bind to and is not sensitive to FKBP12-rapamycin. Interacts with MAP3K2. Interacts with ATF2. Interacts with MAPK8. Interacts with GTP-bound HRAS and KRAS; inhibiting their activity. Interacts with IFNAR2. As to quaternary structure, interacts with CCDC28B. In terms of assembly, interacts with NBN. In terms of processing, phosphorylation at Ser-128 by PKC promotes relocalization to the perinuclear region, where the mTORC2 complex specifically mediates phosphorylation of SGK1. Phosphorylated at Thr-86 by AKT1 or RPS6KB1 in the presence of growth factors; the effect of this phosphorylation is however unclear. According to two studies, phosphorylation at Thr-86 by AKT1 is part of a positive feedback loop that increases mTORC2 activation. According to another study, phosphorylation at Thr-86 and Thr-398 by RPS6KB1 promotes dissociation from the mTORC2 complex, leading to inhibit mTORC2 signaling. In terms of tissue distribution, ubiquitously expressed, with highest levels in heart and skeletal muscle.

It localises to the cell membrane. Its subcellular location is the endoplasmic reticulum membrane. It is found in the early endosome membrane. The protein resides in the late endosome membrane. The protein localises to the lysosome membrane. It localises to the golgi apparatus membrane. Its subcellular location is the mitochondrion outer membrane. It is found in the cytoplasm. The protein resides in the perinuclear region. The protein localises to the nucleus. It localises to the cytosol. Its activity is regulated as follows. Phosphatidylinositol 3,4,5-trisphosphate (PI(3,4,5)P3) promotes MTOR activation by relieving MAPKAP1/SIN1-mediated inhibition of MTOR that takes place in absence of PI(3,4,5)P3. Its function is as follows. Component of the mechanistic target of rapamycin complex 2 (mTORC2), which transduces signals from growth factors to pathways involved in proliferation, cytoskeletal organization, lipogenesis and anabolic output. In response to growth factors, mTORC2 phosphorylates and activates AGC protein kinase family members, including AKT (AKT1, AKT2 and AKT3), PKC (PRKCA, PRKCB and PRKCE) and SGK1. In contrast to mTORC1, mTORC2 is nutrient-insensitive. Within the mTORC2 complex, MAPKAP1/SIN1 acts as a substrate adapter which recognizes and binds AGC protein kinase family members for phosphorylation by MTOR. mTORC2 plays a critical role in AKT1 activation by mediating phosphorylation of different sites depending on the context, such as 'Thr-450', 'Ser-473', 'Ser-477' or 'Thr-479', facilitating the phosphorylation of the activation loop of AKT1 on 'Thr-308' by PDPK1/PDK1 which is a prerequisite for full activation. mTORC2 catalyzes the phosphorylation of SGK1 at 'Ser-422' and of PRKCA on 'Ser-657'. The mTORC2 complex also phosphorylates various proteins involved in insulin signaling, such as FBXW8 and IGF2BP1. mTORC2 acts upstream of Rho GTPases to regulate the actin cytoskeleton, probably by activating one or more Rho-type guanine nucleotide exchange factors. mTORC2 promotes the serum-induced formation of stress-fibers or F-actin. MAPKAP1 inhibits MAP3K2 by preventing its dimerization and autophosphorylation. Inhibits HRAS and KRAS independently of mTORC2 complex. Enhances osmotic stress-induced phosphorylation of ATF2 and ATF2-mediated transcription. Involved in ciliogenesis, regulates cilia length through its interaction with CCDC28B independently of mTORC2 complex. Functionally, in contrast to isoform 1, isoform 2 and isoform 6, isoform 4 is not a component of the a mTORC2 complex. The sequence is that of Target of rapamycin complex 2 subunit MAPKAP1 from Homo sapiens (Human).